Here is a 306-residue protein sequence, read N- to C-terminus: sn-1-specific diacylglycerol lipase ABHD11 (306 aa).

The interval Gly-19–Glu-40 is disordered. A compositionally biased stretch (low complexity) spans Ala-23–Ser-33. Lys-78 is modified (N6-succinyllysine). Catalysis depends on charge relay system residues Ser-132, Asp-228, and His-287.

It belongs to the AB hydrolase superfamily. In terms of assembly, interacts with OGDH and DLST; this interaction maintains the functional lipoylation of the 2-oxoglutarate dehydrogenase complex. Phosphorylated. In terms of tissue distribution, ubiquitously expressed. Highly expressed in small intestine, prostate and thyroid, while aorta and colon tissues exhibit weak expression levels.

It localises to the mitochondrion. The protein localises to the mitochondrion matrix. It catalyses the reaction 1-octadecanoyl-2-(5Z,8Z,11Z,14Z-eicosatetraenoyl)-sn-glycerol + H2O = 2-(5Z,8Z,11Z,14Z-eicosatetraenoyl)-glycerol + octadecanoate + H(+). The catalysed reaction is a 1,2-diacyl-sn-glycerol + H2O = a 2-acylglycerol + a fatty acid + H(+). It carries out the reaction a 1,3-diacyl-sn-glycerol + H2O = a 1-acyl-sn-glycerol + a fatty acid + H(+). The enzyme catalyses 1-octadecanoyl-2-(9Z-octadecenoyl)-sn-glycerol + H2O = 2-(9Z-octadecenoyl)-glycerol + octadecanoate + H(+). It catalyses the reaction 1-octadecanoyl-2-(4Z,7Z,10Z,13Z,16Z,19Z-docosahexaenoyl)-sn-glycerol + H2O = 2-(4Z,7Z,10Z,13Z,16Z,19Z-docosahexaenoyl)-glycerol + octadecanoate + H(+). The catalysed reaction is 1,2-didecanoylglycerol + H2O = decanoylglycerol + decanoate + H(+). Its function is as follows. Catalyzes the hydrolysis of diacylglycerol in vitro and may function as a key regulator in lipid metabolism, namely by regulating the intracellular levels of diacylglycerol. 1,2-diacyl-sn-glycerols are the preferred substrate over 1,3-diacyl-sn-glycerols. The enzyme hydrolyzes stearate in preference to palmitate from the sn-1 position of 1,2-diacyl-sn-glycerols. Maintains the functional lipoylation of the 2-oxoglutarate dehydrogenase complex (OGDHc) through its interaction with the OGDHc by preventing the formation of lipoyl adducts. In addition, is also required for the expansion and differentiation of embryonic stem cells (ESCs). This Homo sapiens (Human) protein is sn-1-specific diacylglycerol lipase ABHD11.